Reading from the N-terminus, the 258-residue chain is uncharacterized protein (258 aa).

3 helical membrane-spanning segments follow: residues 38–58 (VFGLLIALICFSNVLCFLFIA), 72–92 (ALIFTLFIPFVTSLLANIIFI), and 111–131 (FLVICAFSSLPIVNIWLMLWW).

Its subcellular location is the cell membrane. This is an uncharacterized protein from Mycoplasma pneumoniae (strain ATCC 29342 / M129 / Subtype 1) (Mycoplasmoides pneumoniae).